We begin with the raw amino-acid sequence, 330 residues long: Autoinducer 2 import system permease protein LsrD (330 aa).

Over 1 to 4 the chain is Cytoplasmic; sequence MRIR. Residues 5–25 traverse the membrane as a helical segment; it reads YGWELALAALLVIEIVSFGAI. The Periplasmic portion of the chain corresponds to 26 to 42; the sequence is NPRMLDLNMLLFSTSDF. Residues 43-63 traverse the membrane as a helical segment; it reads ICIGIVALPLTMVIVSGGIDI. Topologically, residues 64–67 are cytoplasmic; sequence SFGS. The next 2 helical transmembrane spans lie at 68 to 88 and 89 to 109; these read TIGLCAIALGVLFQSGVPMPL and AILLTLLLGALCGLINAGLII. The Cytoplasmic segment spans residues 110–115; the sequence is YTKVNP. Residues 116–136 form a helical membrane-spanning segment; sequence LVITLGTLYLFAGSALLLSGM. The Periplasmic portion of the chain corresponds to 137 to 159; the sequence is AGATGYEGIGGFPMAFTDFANLD. The chain crosses the membrane as a helical span at residues 160–180; sequence VLGLPVPLIIFLICLLVFWLW. At 181-209 the chain is on the cytoplasmic side; the sequence is LHKTHAGRNVFLIGQSPRVALYSAIPVNR. The helical transmembrane segment at 210-230 threads the bilayer; that stretch reads TLCALYAMTGLASAVAAVLLV. The Periplasmic portion of the chain corresponds to 231–237; the sequence is SYFGSAR. A run of 2 helical transmembrane segments spans residues 238 to 258 and 259 to 279; these read SDLGASFLMPAITAVVLGGAN and IYGGSGAIIGTAIAVLLVGYL. Over 280–285 the chain is Periplasmic; the sequence is QQGLQM. Residues 286 to 306 form a helical membrane-spanning segment; that stretch reads AGVPNQVSSALSGALLIVVVV. Over 307-330 the chain is Cytoplasmic; the sequence is GRSVSLHRQQIKEWLARRANNPLP.

It belongs to the binding-protein-dependent transport system permease family. AraH/RbsC subfamily. In terms of assembly, the complex is composed of two ATP-binding proteins (LsrA), two transmembrane proteins (LsrC and LsrD) and a solute-binding protein (LsrB).

It localises to the cell inner membrane. Its function is as follows. Part of the ABC transporter complex LsrABCD involved in autoinducer 2 (AI-2) import. Probably responsible for the translocation of the substrate across the membrane. The polypeptide is Autoinducer 2 import system permease protein LsrD (lsrD) (Escherichia coli O157:H7).